The primary structure comprises 382 residues: Dual-specificity RNA methyltransferase RlmN (382 aa).

Residue E91 is the Proton acceptor of the active site. One can recognise a Radical SAM core domain in the interval 97-339 (ETDRGTLCIS…TTVRKTRGDD (243 aa)). An intrachain disulfide couples C104 to C344. [4Fe-4S] cluster is bound by residues C111, C115, and C118. S-adenosyl-L-methionine is bound by residues 165-166 (GE), S197, 219-221 (SLH), and N301. C344 (S-methylcysteine intermediate) is an active-site residue.

It belongs to the radical SAM superfamily. RlmN family. The cofactor is [4Fe-4S] cluster.

It localises to the cytoplasm. The catalysed reaction is adenosine(2503) in 23S rRNA + 2 reduced [2Fe-2S]-[ferredoxin] + 2 S-adenosyl-L-methionine = 2-methyladenosine(2503) in 23S rRNA + 5'-deoxyadenosine + L-methionine + 2 oxidized [2Fe-2S]-[ferredoxin] + S-adenosyl-L-homocysteine. It catalyses the reaction adenosine(37) in tRNA + 2 reduced [2Fe-2S]-[ferredoxin] + 2 S-adenosyl-L-methionine = 2-methyladenosine(37) in tRNA + 5'-deoxyadenosine + L-methionine + 2 oxidized [2Fe-2S]-[ferredoxin] + S-adenosyl-L-homocysteine. In terms of biological role, specifically methylates position 2 of adenine 2503 in 23S rRNA and position 2 of adenine 37 in tRNAs. m2A2503 modification seems to play a crucial role in the proofreading step occurring at the peptidyl transferase center and thus would serve to optimize ribosomal fidelity. The sequence is that of Dual-specificity RNA methyltransferase RlmN from Polaromonas sp. (strain JS666 / ATCC BAA-500).